The chain runs to 69 residues: Putative membrane protein insertion efficiency factor (69 aa).

Belongs to the UPF0161 family.

It is found in the cell inner membrane. Could be involved in insertion of integral membrane proteins into the membrane. The protein is Putative membrane protein insertion efficiency factor of Novosphingobium aromaticivorans (strain ATCC 700278 / DSM 12444 / CCUG 56034 / CIP 105152 / NBRC 16084 / F199).